Consider the following 425-residue polypeptide: Histidine--tRNA ligase (425 aa).

Belongs to the class-II aminoacyl-tRNA synthetase family. Homodimer.

Its subcellular location is the cytoplasm. It carries out the reaction tRNA(His) + L-histidine + ATP = L-histidyl-tRNA(His) + AMP + diphosphate + H(+). The polypeptide is Histidine--tRNA ligase (Listeria monocytogenes serovar 1/2a (strain ATCC BAA-679 / EGD-e)).